The chain runs to 258 residues: Thrombin-like enzyme ancrod-2 (258 aa).

Positions 1–18 are cleaved as a signal peptide; that stretch reads MVLIRVLANLVILQLSYA. Residues 19 to 24 constitute a propeptide that is removed on maturation; that stretch reads QKSSEL. The Peptidase S1 domain occupies 25-251; that stretch reads VIGGDECNIN…HLHWILSIMA (227 aa). Cystine bridges form between C31–C165, C52–C68, C102–C256, C144–C212, C176–C191, and C202–C227. Residues H67 and D112 each act as charge relay system in the active site. 2 N-linked (GlcNAc...) asparagine glycosylation sites follow: N123 and N172. The active-site Charge relay system is the S206. N253 carries an N-linked (GlcNAc...) asparagine glycan.

This sequence belongs to the peptidase S1 family. Snake venom subfamily. As to quaternary structure, monomer. As to expression, expressed by the venom gland.

The protein localises to the secreted. The enzyme catalyses Selective cleavage of Arg-|-Xaa bond in fibrinogen, to form fibrin, and release fibrinopeptide A. The specificity of further degradation of fibrinogen varies with species origin of the enzyme.. Thrombin-like snake venom serine protease. Cleaves fibrinogen (FGA) to split of fibrinopeptides AM, AO, and AY; the aberrant fibrinogen is then incapable of being cross-linked, forming easily dispersible clots. The protein is Thrombin-like enzyme ancrod-2 of Calloselasma rhodostoma (Malayan pit viper).